A 378-amino-acid polypeptide reads, in one-letter code: C-type lectin domain family 17, member A (378 aa).

The interval 1-119 (MHNLYSITGY…PPLPCKPRNM (119 aa)) is disordered. Residues 1-172 (MHNLYSITGY…GCCQKRWMVY (172 aa)) lie on the Cytoplasmic side of the membrane. Composition is skewed to acidic residues over residues 17–27 (MEEEEEDDDYE), 43–53 (MEEEEEDDDYE), and 69–79 (MEEEEEDDDYE). Positions 86-101 (KDLPPKPGSSAPPRPP) are enriched in pro residues. The helical; Signal-anchor for type II membrane protein transmembrane segment at 173–193 (LCLLVVTSLFLGCLGLTVTLI) threads the bilayer. Residues 194–378 (KYQELMEELR…YWICERKCSC (185 aa)) lie on the Extracellular side of the membrane. 2 N-linked (GlcNAc...) asparagine glycosylation sites follow: Asn215 and Asn237. 3 cysteine pairs are disulfide-bonded: Cys254–Cys265, Cys282–Cys372, and Cys350–Cys364. Residues 261-373 (FEGKCYYFSP…CYKTTYWICE (113 aa)) form the C-type lectin domain. N-linked (GlcNAc...) asparagine glycosylation occurs at Asn285. Residues Glu341, Asn343, Glu348, Asn360, and Asp361 each coordinate Ca(2+).

Oligomer; disulfide-linked. In terms of processing, phosphorylated on tyrosine residues. In terms of tissue distribution, expressed on dividing B-cells of germinal centers in various tissues, including lymph nodes, tonsils, stomach, intestine, appendix and spleen.

It localises to the membrane. In terms of biological role, cell surface receptor which may be involved in carbohydrate-mediated communication between cells in the germinal center. Binds glycans with terminal alpha-linked mannose or fucose residues. This chain is C-type lectin domain family 17, member A (CLEC17A), found in Homo sapiens (Human).